A 196-amino-acid chain; its full sequence is MYEYFKGIISKITAKYIVLEVNSIGYILHVANPYAYSGQLHQEAKVYVHQVVREDAELLYGFATEEEKQLFLSLISVSGIGPVSALAIIAADDNAGLVQAIEQKNITYLTKFPKIGKKTAQQMVLDLEGKVVAAGSPAESKAPVQTADNQELEEAMEAMLALGYKAAELKKIKKFFEGTTDTAENYIKSALKMLVK.

Residues 1–63 (MYEYFKGIIS…EDAELLYGFA (63 aa)) form a domain I region. The tract at residues 64 to 142 (TEEEKQLFLS…AAGSPAESKA (79 aa)) is domain II. The flexible linker stretch occupies residues 143–146 (PVQT). A domain III region spans residues 147–196 (ADNQELEEAMEAMLALGYKAAELKKIKKFFEGTTDTAENYIKSALKMLVK).

It belongs to the RuvA family. As to quaternary structure, homotetramer. Forms an RuvA(8)-RuvB(12)-Holliday junction (HJ) complex. HJ DNA is sandwiched between 2 RuvA tetramers; dsDNA enters through RuvA and exits via RuvB. An RuvB hexamer assembles on each DNA strand where it exits the tetramer. Each RuvB hexamer is contacted by two RuvA subunits (via domain III) on 2 adjacent RuvB subunits; this complex drives branch migration. In the full resolvosome a probable DNA-RuvA(4)-RuvB(12)-RuvC(2) complex forms which resolves the HJ.

It is found in the cytoplasm. In terms of biological role, the RuvA-RuvB-RuvC complex processes Holliday junction (HJ) DNA during genetic recombination and DNA repair, while the RuvA-RuvB complex plays an important role in the rescue of blocked DNA replication forks via replication fork reversal (RFR). RuvA specifically binds to HJ cruciform DNA, conferring on it an open structure. The RuvB hexamer acts as an ATP-dependent pump, pulling dsDNA into and through the RuvAB complex. HJ branch migration allows RuvC to scan DNA until it finds its consensus sequence, where it cleaves and resolves the cruciform DNA. This Streptococcus sanguinis (strain SK36) protein is Holliday junction branch migration complex subunit RuvA.